The primary structure comprises 319 residues: Tetrahydromethanopterin S-methyltransferase subunit H (319 aa).

The protein belongs to the MtrH family. In terms of assembly, the complex is composed of 8 subunits; MtrA, MtrB, MtrC, MtrD, MtrE, MtrF, MtrG and MtrH.

The enzyme catalyses 5-methyl-5,6,7,8-tetrahydromethanopterin + coenzyme M + 2 Na(+)(in) = 5,6,7,8-tetrahydromethanopterin + methyl-coenzyme M + 2 Na(+)(out). The protein operates within one-carbon metabolism; methanogenesis from CO(2); methyl-coenzyme M from 5,10-methylene-5,6,7,8-tetrahydromethanopterin: step 2/2. Part of a complex that catalyzes the formation of methyl-coenzyme M and tetrahydromethanopterin from coenzyme M and methyl-tetrahydromethanopterin. This is an energy-conserving, sodium-ion translocating step. MtrH catalyzes the transfer of the methyl group from methyl-tetrahydromethanopterin to the corrinoid prosthetic group of MtrA. In Methanococcus maripaludis (strain DSM 14266 / JCM 13030 / NBRC 101832 / S2 / LL), this protein is Tetrahydromethanopterin S-methyltransferase subunit H.